The following is a 456-amino-acid chain: UDP-N-acetylglucosamine 1-carboxyvinyltransferase (456 aa).

34-35 serves as a coordination point for phosphoenolpyruvate; it reads KN. Arginine 104 provides a ligand contact to UDP-N-acetyl-alpha-D-glucosamine. Cysteine 128 (proton donor) is an active-site residue. Cysteine 128 bears the 2-(S-cysteinyl)pyruvic acid O-phosphothioketal mark. UDP-N-acetyl-alpha-D-glucosamine-binding residues include aspartate 319 and isoleucine 341.

The protein belongs to the EPSP synthase family. MurA subfamily.

It localises to the cytoplasm. The catalysed reaction is phosphoenolpyruvate + UDP-N-acetyl-alpha-D-glucosamine = UDP-N-acetyl-3-O-(1-carboxyvinyl)-alpha-D-glucosamine + phosphate. Its pathway is cell wall biogenesis; peptidoglycan biosynthesis. Functionally, cell wall formation. Adds enolpyruvyl to UDP-N-acetylglucosamine. The sequence is that of UDP-N-acetylglucosamine 1-carboxyvinyltransferase from Prochlorococcus marinus (strain MIT 9301).